Reading from the N-terminus, the 453-residue chain is Oocyte zinc finger protein XlCOF6 (453 aa).

14 consecutive C2H2-type zinc fingers follow at residues 6-29 (FICSKCGETFTVNSHLLTHLCGKH), 67-89 (FTCTECGKSFSERDNLKCHHKTH), 95-117 (FTCMECGKGFSVKSSLKHHYKAH), 123-145 (VRCTECGKEFTSKYYLNVHKRLH), 151-173 (FTCTQCGKCFSDKSALKYHHKTH), 179-201 (FACTECGKSFTEKSILQKHQRTH), 207-229 (FTCTECGKSYSAMSTLECHRRTH), 235-257 (FTCTECGKSFTEKSILRKHHKTH), 263-285 (FTCTECGKSCTEKSILRKHQITH), 291-313 (FTCTECGKCFSDKTALKYHHKTH), 319-341 (FACTECGKSFTDKSILRNHQRTH), 375-397 (FTCTECGKSFTEKSILRKHHKTH), 403-425 (FTCTECGKSFTHKSILQKHQRTH), and 431-453 (FTCTECGKCFSDKTAIKYHRITH).

The protein belongs to the krueppel C2H2-type zinc-finger protein family.

Its subcellular location is the nucleus. In terms of biological role, may be involved in transcriptional regulation. This chain is Oocyte zinc finger protein XlCOF6, found in Xenopus laevis (African clawed frog).